The sequence spans 300 residues: MTAFGVEPYGQPKYLEIAGKRMAYIDEGKGDAIVFQHGNPTSSYLWRNIMPHLEGLGRLVACDLIGMGASDKLSPSGPDRYSYGEQRDFLFALWDALDLGDHVVLVLHDWGSALGFDWANQHRDRVQGIAFMEAIVTPMTWADWPPAVRGVFQGFRSPQGEPMALEHNIFVERVLPGAILRQLSDEEMNHYRRPFVNGGEDRRPTLSWPRNLPIDGEPAEVVALVNEYRSWLEETDMPKLFINAEPGAIITGRIRDYVRSWPNQTEITVPGVHFVQEDSPEEIGAAIAQFVRRLRSAAGV.

One can recognise an AB hydrolase-1 domain in the interval A32–F155. D109 functions as the Nucleophile in the catalytic mechanism. Residue E133 is the Proton donor of the active site. H273 serves as the catalytic Proton acceptor.

The protein belongs to the haloalkane dehalogenase family. Type 2 subfamily. Monomer.

It carries out the reaction 1-haloalkane + H2O = a halide anion + a primary alcohol + H(+). Its function is as follows. Catalyzes hydrolytic cleavage of carbon-halogen bonds in halogenated aliphatic compounds, leading to the formation of the corresponding primary alcohols, halide ions and protons. This chain is Haloalkane dehalogenase, found in Mycobacterium tuberculosis (strain ATCC 25177 / H37Ra).